The chain runs to 279 residues: Biotin synthase (279 aa).

A Radical SAM core domain is found at 1–227 (MKVYLCAISN…NAMIMVAGGR (227 aa)). The [4Fe-4S] cluster site is built by Cys16, Cys20, and Cys23. Cys60, Cys95, and Cys153 together coordinate [2Fe-2S] cluster.

It belongs to the radical SAM superfamily. Biotin synthase family. As to quaternary structure, homodimer. Requires [4Fe-4S] cluster as cofactor. [2Fe-2S] cluster serves as cofactor.

The catalysed reaction is (4R,5S)-dethiobiotin + (sulfur carrier)-SH + 2 reduced [2Fe-2S]-[ferredoxin] + 2 S-adenosyl-L-methionine = (sulfur carrier)-H + biotin + 2 5'-deoxyadenosine + 2 L-methionine + 2 oxidized [2Fe-2S]-[ferredoxin]. It functions in the pathway cofactor biosynthesis; biotin biosynthesis; biotin from 7,8-diaminononanoate: step 2/2. In terms of biological role, catalyzes the conversion of dethiobiotin (DTB) to biotin by the insertion of a sulfur atom into dethiobiotin via a radical-based mechanism. The sequence is that of Biotin synthase from Nitratiruptor sp. (strain SB155-2).